A 206-amino-acid polypeptide reads, in one-letter code: Small ribosomal subunit protein uS4 (206 aa).

The region spanning Arg98 to Glu176 is the S4 RNA-binding domain.

Belongs to the universal ribosomal protein uS4 family. As to quaternary structure, part of the 30S ribosomal subunit. Contacts protein S5. The interaction surface between S4 and S5 is involved in control of translational fidelity.

Functionally, one of the primary rRNA binding proteins, it binds directly to 16S rRNA where it nucleates assembly of the body of the 30S subunit. With S5 and S12 plays an important role in translational accuracy. This is Small ribosomal subunit protein uS4 from Gloeobacter violaceus (strain ATCC 29082 / PCC 7421).